Consider the following 369-residue polypeptide: Histidinol-phosphate aminotransferase 2 (369 aa).

K231 bears the N6-(pyridoxal phosphate)lysine mark.

This sequence belongs to the class-II pyridoxal-phosphate-dependent aminotransferase family. Histidinol-phosphate aminotransferase subfamily. As to quaternary structure, homodimer. Pyridoxal 5'-phosphate is required as a cofactor.

It carries out the reaction L-histidinol phosphate + 2-oxoglutarate = 3-(imidazol-4-yl)-2-oxopropyl phosphate + L-glutamate. The protein operates within amino-acid biosynthesis; L-histidine biosynthesis; L-histidine from 5-phospho-alpha-D-ribose 1-diphosphate: step 7/9. This Legionella pneumophila (strain Paris) protein is Histidinol-phosphate aminotransferase 2.